The primary structure comprises 211 residues: Uridine kinase (211 aa).

Position 12–19 (12–19 (GGSGGGKT)) interacts with ATP.

It belongs to the uridine kinase family.

It localises to the cytoplasm. The catalysed reaction is uridine + ATP = UMP + ADP + H(+). The enzyme catalyses cytidine + ATP = CMP + ADP + H(+). Its pathway is pyrimidine metabolism; CTP biosynthesis via salvage pathway; CTP from cytidine: step 1/3. It participates in pyrimidine metabolism; UMP biosynthesis via salvage pathway; UMP from uridine: step 1/1. The protein is Uridine kinase of Streptococcus thermophilus (strain CNRZ 1066).